The sequence spans 577 residues: Zinc finger-containing ubiquitin peptidase 1 (577 aa).

The C2H2-type 1 zinc finger occupies 2-24 (LSCDICGETVTSEPDRKAHLIVH). The C2H2-type 2; atypical zinc finger occupies 29–52 (IICPFCKLSGINYNEMCFHIETAH). 2 C2H2-type zinc fingers span residues 153–176 (PECP…KTKH) and 192–214 (YDCP…VDLH). The MIU stretch occupies residues 225–247 (DRVQCSSDRELAHQLQQEEERKR). The span at 231 to 261 (SDRELAHQLQQEEERKRKSEESRQEREEFQK) shows a compositional bias: basic and acidic residues. The segment at 231–262 (SDRELAHQLQQEEERKRKSEESRQEREEFQKL) is disordered. Positions 248–273 (KSEESRQEREEFQKLQRQYGLDNSGG) are zUBD/ZHA. Residue lysine 261 is modified to N6-acetyllysine. Cysteine 359 serves as the catalytic Nucleophile. Histidine 490 serves as the catalytic Proton acceptor. The active site involves aspartate 511.

Belongs to the peptidase C78 family. ZUFSP subfamily. Interacts with RPA1 and RPA2.

It is found in the cytoplasm. Its subcellular location is the nucleus. The enzyme catalyses Thiol-dependent hydrolysis of ester, thioester, amide, peptide and isopeptide bonds formed by the C-terminal Gly of ubiquitin (a 76-residue protein attached to proteins as an intracellular targeting signal).. Functionally, deubiquitinase with endodeubiquitinase activity that specifically interacts with and cleaves 'Lys-63'-linked long polyubiquitin chains. Shows only weak activity against 'Lys-11' and 'Lys-48'-linked chains. Plays an important role in genome stability pathways, functioning to prevent spontaneous DNA damage and also promote cellular survival in response to exogenous DNA damage. Modulates the ubiquitination status of replication protein A (RPA) complex proteins in response to replication stress. This is Zinc finger-containing ubiquitin peptidase 1 from Rattus norvegicus (Rat).